Here is a 149-residue protein sequence, read N- to C-terminus: Macrodomain Ter protein (149 aa).

It belongs to the MatP family. As to quaternary structure, homodimer.

It is found in the cytoplasm. Required for spatial organization of the terminus region of the chromosome (Ter macrodomain) during the cell cycle. Prevents early segregation of duplicated Ter macrodomains during cell division. Binds specifically to matS, which is a 13 bp signature motif repeated within the Ter macrodomain. The sequence is that of Macrodomain Ter protein from Vibrio parahaemolyticus serotype O3:K6 (strain RIMD 2210633).